The primary structure comprises 262 residues: Sepiapterin reductase (262 aa).

The residue at position 1 (M1) is an N-acetylmethionine. 15 to 21 is a binding site for NADP(+); sequence GASRGFG. S33 bears the Phosphoserine mark. 43-44 is a binding site for NADP(+); it reads RS. Position 46 is a phosphoserine; by CaMK2; in vitro (S46). Residue 70–71 participates in NADP(+) binding; it reads DL. Substrate-binding positions include 158–159 and Y171; that span reads SL. K175 contacts NADP(+). S196 bears the Phosphoserine; by CaMK2; in vitro mark. G200 contacts substrate. Position 202-207 (202-207) interacts with NADP(+); sequence LDTNMQ. The residue at position 214 (S214) is a Phosphoserine; by CaMK2; in vitro. Position 258 (D258) interacts with substrate.

The protein belongs to the sepiapterin reductase family. Homodimer. In terms of processing, in vitro phosphorylation of Ser-46, Ser-196 and Ser-214 by CaMK2 does not change kinetic parameters.

The protein localises to the cytoplasm. It carries out the reaction L-erythro-7,8-dihydrobiopterin + NADP(+) = L-sepiapterin + NADPH + H(+). The enzyme catalyses (6R)-L-erythro-5,6,7,8-tetrahydrobiopterin + 2 NADP(+) = 6-pyruvoyl-5,6,7,8-tetrahydropterin + 2 NADPH + 2 H(+). Catalyzes the final one or two reductions in tetra-hydrobiopterin biosynthesis to form 5,6,7,8-tetrahydrobiopterin. The sequence is that of Sepiapterin reductase (Spr) from Rattus norvegicus (Rat).